The sequence spans 658 residues: Glycogen debranching enzyme (658 aa).

The active-site Nucleophile is aspartate 336. The Proton donor role is filled by glutamate 371. A disordered region spans residues 459–484; it reads EANGEENRDGTNSNYSDNHGKEGLGG.

Belongs to the glycosyl hydrolase 13 family.

It catalyses the reaction Hydrolysis of (1-&gt;6)-alpha-D-glucosidic linkages to branches with degrees of polymerization of three or four glucose residues in limit dextrin.. It participates in glycan degradation; glycogen degradation. Its function is as follows. Removes maltotriose and maltotetraose chains that are attached by 1,6-alpha-linkage to the limit dextrin main chain, generating a debranched limit dextrin. This Salmonella paratyphi B (strain ATCC BAA-1250 / SPB7) protein is Glycogen debranching enzyme.